Here is a 101-residue protein sequence, read N- to C-terminus: uncharacterized protein (101 aa).

This is an uncharacterized protein from Acanthamoeba polyphaga mimivirus (APMV).